The sequence spans 378 residues: MAMETGLIFHPYMRPGRSARQTFDWGIKSAVQADSVGIDSMMISEHASQIWENIPNPELLIAAAALQTKNIKFAPMAHLLPHQHPAKLATMIGWLSQILEGRYFLGIGAGAYPQASYMHGIRNAGQSNTATGGEETKNLNDMVRESLFIMEKIWKREPFFHEGKYWDAGYPEELEGEEGDEQHKLADFSPWGGKAPEIAVTGFSYNSPSMRLAGERNFKPVSIFSGLDALKRHWEVYSEAAIEAGHTPDRSRHAVSHTVFCADTDKEAKRLVMEGPIGYCFERYLIPIWRRFGMMDGYAKDAGIDPVDADLEFLVDNVFLVGSPDTVTEKINALFEATGGWGTLQVEAHDYYDDPAPWFQSLELISKEVAPKILLPKR.

FMN-binding positions include His10, Ser44, Met76, and 201 to 209 (TGFSYNSPS).

It belongs to the bacterial luciferase oxidoreductase family. Homodimer. Likely forms a loose transient complex with a P.putida flavin reductase that provides the required FMNH(2) to the enzyme.

The catalysed reaction is (1S,4S)-bornane-2,5-dione + FMNH2 + O2 = (1S,4S)-5-oxo-1,2-campholide + FMN + H2O + H(+). Involved in the degradation and assimilation of (-)-camphor, which allows P.putida strain NCIMB 10007 to grow on this enantiomer of camphor as the sole carbon source. Catalyzes the FMNH(2)-dependent lactonization of 3,6-diketocamphane via a Baeyer-Villiger oxidation to produce the unstable lactone 5-oxo-1,2-campholide with (S,S) configuration, that presumably undergoes spontaneous hydrolysis to form 2-oxo-Delta(3)-4,5,5-trimethylcyclopentenylacetate. Is also able to convert (-)-camphor to the corresponding lactone in vitro. Shows no conversion of (+)-camphor, (+)-fenchone, (-)-fenchone, and (+)-nopinone. Acts on other bicyclic ketones but very poorly on a few 2- and 4-substituted monocyclic ketones. In Pseudomonas putida (Arthrobacter siderocapsulatus), this protein is 3,6-diketocamphane 1,6-monooxygenase.